We begin with the raw amino-acid sequence, 142 residues long: Hemoglobin subunit alpha-A (142 aa).

Positions 2 to 142 (VLSAADKNNV…VGTVLTAKYR (141 aa)) constitute a Globin domain. Position 59 (histidine 59) interacts with O2. Position 88 (histidine 88) interacts with heme b.

The protein belongs to the globin family. In terms of assembly, heterotetramer of two alpha chains and two beta chains. In terms of tissue distribution, red blood cells.

Functionally, involved in oxygen transport from the lung to the various peripheral tissues. The sequence is that of Hemoglobin subunit alpha-A (HBAA) from Gallus gallus (Chicken).